Reading from the N-terminus, the 185-residue chain is MISDIRKDAEVRMEKCVEAFKTQISKVRTGRASPSLLDGIVVEYYGTPTPLRQLASVTVEDSRTLKINVFDRSMGPAVEKAIMASDLGLNPSSAGTDIRVPLPPLTEERRKDLTKIVRGEAEQARVAVRNVRRDANDKVKALLKDKAISEDDDRRSQEEVQKMTDAAIKKVDAALADKEAELMQF.

This sequence belongs to the RRF family.

It localises to the cytoplasm. Its function is as follows. Responsible for the release of ribosomes from messenger RNA at the termination of protein biosynthesis. May increase the efficiency of translation by recycling ribosomes from one round of translation to another. The protein is Ribosome-recycling factor of Salmonella arizonae (strain ATCC BAA-731 / CDC346-86 / RSK2980).